The chain runs to 221 residues: Adenylate kinase (221 aa).

An ATP-binding site is contributed by 10–15 (GAGKGT). The interval 30-59 (STGDMLRAAVKARTELGVAAKKIMDAGGLV) is NMP. AMP-binding positions include Thr31, Arg36, 57–59 (GLV), 85–88 (GFPR), and Gln92. An LID region spans residues 122-159 (GRRVHLASGRTYHIKFNPPKVEGKDDITGDPLIQRDDD). Residues Arg123 and 132-133 (TY) each bind ATP. AMP contacts are provided by Arg156 and Arg167. Residue Ser207 coordinates ATP.

The protein belongs to the adenylate kinase family. As to quaternary structure, monomer.

It is found in the cytoplasm. It catalyses the reaction AMP + ATP = 2 ADP. It participates in purine metabolism; AMP biosynthesis via salvage pathway; AMP from ADP: step 1/1. Its function is as follows. Catalyzes the reversible transfer of the terminal phosphate group between ATP and AMP. Plays an important role in cellular energy homeostasis and in adenine nucleotide metabolism. The polypeptide is Adenylate kinase (Polynucleobacter necessarius subsp. necessarius (strain STIR1)).